The following is a 318-amino-acid chain: Methionyl-tRNA formyltransferase (318 aa).

112 to 115 (SILP) lines the (6S)-5,6,7,8-tetrahydrofolate pocket.

The protein belongs to the Fmt family.

The enzyme catalyses L-methionyl-tRNA(fMet) + (6R)-10-formyltetrahydrofolate = N-formyl-L-methionyl-tRNA(fMet) + (6S)-5,6,7,8-tetrahydrofolate + H(+). Functionally, attaches a formyl group to the free amino group of methionyl-tRNA(fMet). The formyl group appears to play a dual role in the initiator identity of N-formylmethionyl-tRNA by promoting its recognition by IF2 and preventing the misappropriation of this tRNA by the elongation apparatus. In Shewanella baltica (strain OS195), this protein is Methionyl-tRNA formyltransferase.